A 125-amino-acid polypeptide reads, in one-letter code: Large ribosomal subunit protein bL20 (125 aa).

The protein belongs to the bacterial ribosomal protein bL20 family.

Its function is as follows. Binds directly to 23S ribosomal RNA and is necessary for the in vitro assembly process of the 50S ribosomal subunit. It is not involved in the protein synthesizing functions of that subunit. In Methylobacterium radiotolerans (strain ATCC 27329 / DSM 1819 / JCM 2831 / NBRC 15690 / NCIMB 10815 / 0-1), this protein is Large ribosomal subunit protein bL20.